A 116-amino-acid polypeptide reads, in one-letter code: Large ribosomal subunit protein bL17 (116 aa).

Belongs to the bacterial ribosomal protein bL17 family. As to quaternary structure, part of the 50S ribosomal subunit. Contacts protein L32.

This is Large ribosomal subunit protein bL17 from Cyanothece sp. (strain PCC 7425 / ATCC 29141).